Reading from the N-terminus, the 539-residue chain is Phosphoenolpyruvate carboxykinase (ATP) (539 aa).

Residues arginine 64, tyrosine 206, and lysine 212 each coordinate substrate. Residues lysine 212, histidine 231, and 247 to 255 (GLSGTGKTT) each bind ATP. Residues lysine 212 and histidine 231 each contribute to the Mn(2+) site. A Mn(2+)-binding site is contributed by aspartate 268. Residues glutamate 296, arginine 332, 448 to 449 (RI), and threonine 454 each bind ATP. Arginine 332 contacts substrate.

The protein belongs to the phosphoenolpyruvate carboxykinase (ATP) family. As to quaternary structure, monomer. Mn(2+) serves as cofactor.

The protein localises to the cytoplasm. The enzyme catalyses oxaloacetate + ATP = phosphoenolpyruvate + ADP + CO2. It participates in carbohydrate biosynthesis; gluconeogenesis. In terms of biological role, involved in the gluconeogenesis. Catalyzes the conversion of oxaloacetate (OAA) to phosphoenolpyruvate (PEP) through direct phosphoryl transfer between the nucleoside triphosphate and OAA. The polypeptide is Phosphoenolpyruvate carboxykinase (ATP) (Yersinia pestis bv. Antiqua (strain Antiqua)).